The primary structure comprises 182 residues: Small ribosomal subunit protein uS4c (182 aa).

The S4 RNA-binding domain occupies 82 to 143; the sequence is MRLDNILFRL…KQRSKALIQN (62 aa).

Belongs to the universal ribosomal protein uS4 family. In terms of assembly, part of the 30S ribosomal subunit. Contacts protein S5. The interaction surface between S4 and S5 is involved in control of translational fidelity.

The protein localises to the plastid. The protein resides in the chloroplast. Its function is as follows. One of the primary rRNA binding proteins, it binds directly to 16S rRNA where it nucleates assembly of the body of the 30S subunit. In terms of biological role, with S5 and S12 plays an important role in translational accuracy. The polypeptide is Small ribosomal subunit protein uS4c (rps4) (Libertia formosa (Snowy mermaid)).